We begin with the raw amino-acid sequence, 295 residues long: MATPLFHGSIVALVTPMTHGEVNYEELKKLVEYHVQAGTHGIVSVGTTGESTTLSIDENVKVIKKTVEFADGRIPIIAGTGSNATSEAIILTKLLTNSGVAGCLSVVPYYNKPTQEGMYLHYKAIAESTDLPQILYNVPSRTGSDLKPETIGRLAEIPNIVGVKEATGDLTRLPLIKKLAGEDFIFLSGDDATGLESMKLGGQGVISVTNNVAAADMAKMCELALAGKFDEAEAINQRLMALHHDLFIEANPIPVKWAAYKLGLISEPNLRLPLTTLSESAQPTVLAALQKAGLI.

Thr-48 contributes to the pyruvate binding site. Residue Tyr-136 is the Proton donor/acceptor of the active site. The Schiff-base intermediate with substrate role is filled by Lys-164. Ile-206 contacts pyruvate.

It belongs to the DapA family. In terms of assembly, homotetramer; dimer of dimers.

Its subcellular location is the cytoplasm. It carries out the reaction L-aspartate 4-semialdehyde + pyruvate = (2S,4S)-4-hydroxy-2,3,4,5-tetrahydrodipicolinate + H2O + H(+). The protein operates within amino-acid biosynthesis; L-lysine biosynthesis via DAP pathway; (S)-tetrahydrodipicolinate from L-aspartate: step 3/4. Functionally, catalyzes the condensation of (S)-aspartate-beta-semialdehyde [(S)-ASA] and pyruvate to 4-hydroxy-tetrahydrodipicolinate (HTPA). The sequence is that of 4-hydroxy-tetrahydrodipicolinate synthase from Actinobacillus pleuropneumoniae serotype 5b (strain L20).